Consider the following 286-residue polypeptide: Thymidylate synthase (286 aa).

A dUMP-binding site is contributed by arginine 21. Asparagine 51 lines the (6R)-5,10-methylene-5,6,7,8-tetrahydrofolate pocket. 150–151 (RR) provides a ligand contact to dUMP. The active-site Nucleophile is the cysteine 170. DUMP-binding positions include 190–193 (RSAD), asparagine 201, and 231–233 (HIY). A (6R)-5,10-methylene-5,6,7,8-tetrahydrofolate-binding site is contributed by aspartate 193. Residue alanine 285 participates in (6R)-5,10-methylene-5,6,7,8-tetrahydrofolate binding.

Belongs to the thymidylate synthase family. Bacterial-type ThyA subfamily. In terms of assembly, homodimer.

Its subcellular location is the cytoplasm. It catalyses the reaction dUMP + (6R)-5,10-methylene-5,6,7,8-tetrahydrofolate = 7,8-dihydrofolate + dTMP. The protein operates within pyrimidine metabolism; dTTP biosynthesis. Functionally, catalyzes the reductive methylation of 2'-deoxyuridine-5'-monophosphate (dUMP) to 2'-deoxythymidine-5'-monophosphate (dTMP) while utilizing 5,10-methylenetetrahydrofolate (mTHF) as the methyl donor and reductant in the reaction, yielding dihydrofolate (DHF) as a by-product. This enzymatic reaction provides an intracellular de novo source of dTMP, an essential precursor for DNA biosynthesis. The protein is Thymidylate synthase of Mycoplasmopsis pulmonis (strain UAB CTIP) (Mycoplasma pulmonis).